Here is a 333-residue protein sequence, read N- to C-terminus: MFRAAAPGQLRRATSLLRFQSTLVIAEHANDTLAPITLNTITAAKHLGGEVSCLVAGTKCDKVAQDLCKVAGVAKVLVAQHDAYKGLLPEELTPLILATQKQFNHTHICAGASAFGKNLLPRIAAKLDVAPISDIIAIKSPDTFVRTIYAGNAICTVKCDEKVKVFSVRGTSFEAAAASGGSASSEKASSTSPVGISEWLDQKLTKSDRPELTGAKVVVSGGRGLKSGENFKLLYDLADQLHAAVGASRAAVDAGFVTNDLQVGQTGKIVAPELYIAVGISGAIQHLAGMKDSKTIVAINKDPEAPIFQVADYGIVADLFKVVPEMTELLKKK.

Residues 1 to 19 constitute a mitochondrion transit peptide; the sequence is MFRAAAPGQLRRATSLLRF. Positions 20–204 are domain I; the sequence is QSTLVIAEHA…GISEWLDQKL (185 aa). At Lys59 the chain carries N6-acetyllysine; alternate. The residue at position 59 (Lys59) is an N6-succinyllysine; alternate. An N6-acetyllysine modification is found at Lys62. An N6-acetyllysine; alternate modification is found at Lys69. At Lys69 the chain carries N6-succinyllysine; alternate. Lys75 is modified (N6-acetyllysine). Lys85 bears the N6-acetyllysine; alternate mark. Lys85 carries the post-translational modification N6-succinyllysine; alternate. At Thr93 the chain carries Phosphothreonine. Residues Lys101 and Lys139 each carry the N6-acetyllysine modification. The residue at position 140 (Ser140) is a Phosphoserine. The residue at position 158 (Lys158) is an N6-acetyllysine; alternate. Lys158 is modified (N6-succinyllysine; alternate). Lys164 bears the N6-acetyllysine mark. Lys187 bears the N6-succinyllysine mark. Lys203 carries the post-translational modification N6-acetyllysine; alternate. Lys203 carries the post-translational modification N6-succinyllysine; alternate. Positions 205–333 are domain II; it reads TKSDRPELTG…PEMTELLKKK (129 aa). The residue at position 216 (Lys216) is an N6-succinyllysine. FAD is bound at residue Arg223. N6-acetyllysine; alternate is present on residues Lys226 and Lys232. Residues Lys226 and Lys232 each carry the N6-succinyllysine; alternate modification. FAD contacts are provided by residues Ser248, 263–266, 281–286, and Asn300; these read VGQT and SGAIQH. Residue Lys301 is modified to N6-succinyllysine. 318–319 is an FAD binding site; the sequence is DL.

Belongs to the ETF alpha-subunit/FixB family. In terms of assembly, heterodimer composed of ETFA and ETFB. Identified in a complex that contains ETFA, ETFB and ETFRF1. Interaction with ETFRF1 promotes dissociation of the bound FAD and loss of electron transfer activity. Interacts with TASOR. It depends on FAD as a cofactor.

It localises to the mitochondrion matrix. Heterodimeric electron transfer flavoprotein that accepts electrons from several mitochondrial dehydrogenases, including acyl-CoA dehydrogenases, glutaryl-CoA and sarcosine dehydrogenase. It transfers the electrons to the main mitochondrial respiratory chain via ETF-ubiquinone oxidoreductase (ETF dehydrogenase). Required for normal mitochondrial fatty acid oxidation and normal amino acid metabolism. This chain is Electron transfer flavoprotein subunit alpha, mitochondrial (ETFA), found in Bos taurus (Bovine).